We begin with the raw amino-acid sequence, 291 residues long: Pirin-like protein (291 aa).

Belongs to the pirin family.

The protein resides in the nucleus. The protein is Pirin-like protein of Solanum lycopersicum (Tomato).